The chain runs to 111 residues: Ciprofloxacin tolerance protein (111 aa).

Residues 1–5 (MVTAN) are Periplasmic-facing. Residues 6–26 (FAAIAGLSLIAVALVAVFFSP) traverse the membrane as a helical segment. Over 27-30 (YRRW) the chain is Cytoplasmic. A helical membrane pass occupies residues 31–51 (LGFMLAGMFFWGLLEVVRFGV). Residues 52–58 (QVTFEMP) are Periplasmic-facing. A helical transmembrane segment spans residues 59–79 (VTYSYLTALSLAMVMVTFVLL). Residues 80–111 (REDKQAQKALANRQYIEHTPVYEDDQQQCSSR) lie on the Cytoplasmic side of the membrane.

It is found in the cell inner membrane. In terms of biological role, may play a role in cellular filamentation, especially in response to ciprofloxacin. Increased expression confers tolerance to the antibiotic ciprofloxacin. The sequence is that of Ciprofloxacin tolerance protein from Acinetobacter baumannii.